A 296-amino-acid chain; its full sequence is Phosphatidylglycerol--prolipoprotein diacylglyceryl transferase (296 aa).

The interval Met-1–Leu-21 is disordered. Helical transmembrane passes span Gly-34–Ile-54, Glu-72–Thr-92, Phe-108–Ile-128, Gly-136–Arg-158, Phe-195–Trp-215, Leu-227–Glu-243, and Leu-258–Gln-278. Arg-158 provides a ligand contact to a 1,2-diacyl-sn-glycero-3-phospho-(1'-sn-glycerol).

This sequence belongs to the Lgt family.

Its subcellular location is the cell membrane. The catalysed reaction is L-cysteinyl-[prolipoprotein] + a 1,2-diacyl-sn-glycero-3-phospho-(1'-sn-glycerol) = an S-1,2-diacyl-sn-glyceryl-L-cysteinyl-[prolipoprotein] + sn-glycerol 1-phosphate + H(+). It functions in the pathway protein modification; lipoprotein biosynthesis (diacylglyceryl transfer). In terms of biological role, catalyzes the transfer of the diacylglyceryl group from phosphatidylglycerol to the sulfhydryl group of the N-terminal cysteine of a prolipoprotein, the first step in the formation of mature lipoproteins. The polypeptide is Phosphatidylglycerol--prolipoprotein diacylglyceryl transferase (Cutibacterium acnes (strain DSM 16379 / KPA171202) (Propionibacterium acnes)).